A 78-amino-acid chain; its full sequence is Exodeoxyribonuclease 7 small subunit (78 aa).

This sequence belongs to the XseB family. As to quaternary structure, heterooligomer composed of large and small subunits.

The protein resides in the cytoplasm. It catalyses the reaction Exonucleolytic cleavage in either 5'- to 3'- or 3'- to 5'-direction to yield nucleoside 5'-phosphates.. In terms of biological role, bidirectionally degrades single-stranded DNA into large acid-insoluble oligonucleotides, which are then degraded further into small acid-soluble oligonucleotides. The polypeptide is Exodeoxyribonuclease 7 small subunit (Nocardia farcinica (strain IFM 10152)).